We begin with the raw amino-acid sequence, 33 residues long: Large ribosomal subunit protein uL24 (33 aa).

Belongs to the universal ribosomal protein uL24 family. As to quaternary structure, component of the large ribosomal subunit.

The protein resides in the cytoplasm. In terms of biological role, component of the large ribosomal subunit. The ribosome is a large ribonucleoprotein complex responsible for the synthesis of proteins in the cell. This chain is Large ribosomal subunit protein uL24 (rpl26), found in Xenopus laevis (African clawed frog).